A 942-amino-acid polypeptide reads, in one-letter code: Endoprotease bli-4 (942 aa).

The first 22 residues, 1–22, serve as a signal peptide directing secretion; that stretch reads MRISIGRIAWQILAVLIAVAFT. A propeptide spanning residues 23–116 is cleaved from the precursor; sequence IEHDSICDES…EQRPKKRVKR (94 aa). Over 117–871 the chain is Lumenal; the sequence is DYILLDNDVH…TLLIDSNKSS (755 aa). Asp124 is a Ca(2+) binding site. A disordered region spans residues 130-160; that stretch reads PFRRSVLNRDGTRRAQRQQPQSPREIPSLPF. Residues 168–483 enclose the Peptidase S8 domain; sequence QWYLHGGAVG…YGLIDGGALV (316 aa). N-linked (GlcNAc...) asparagine glycosylation occurs at Asn195. The active-site Charge relay system is Asp202. Asp203 contacts substrate. Asp211, Asp223, Asp228, and Asp230 together coordinate Ca(2+). The disordered stretch occupies residues 211-242; the sequence is DLAANYDPLASTDINDHDDDPTPQNNGDNKHG. 238–239 serves as a coordination point for substrate; the sequence is DN. Catalysis depends on His241, which acts as the Charge relay system. Leu252, Asn255, Gln257, and Gly259 together coordinate Ca(2+). Disulfide bonds link Cys258–Cys407 and Cys350–Cys380. Substrate-binding positions include Glu283, 300 to 305, Asp311, and 339 to 342; these read SWGPED and ASGN. A Ca(2+)-binding site is contributed by Asp305. Asp348 is a Ca(2+) binding site. Asp353 and Tyr355 together coordinate substrate. Glu378 is a binding site for Ca(2+). The Charge relay system role is filled by Ser415. Substrate is bound at residue Ser415. The P/Homo B domain maps to 491–629; the sequence is TVPEQHICTY…TLLLYGTADP (139 aa). The cysteines at positions 498 and 527 are disulfide-linked. Asn519 carries N-linked (GlcNAc...) asparagine glycosylation. FU repeat units lie at residues 674 to 723, 725 to 777, and 804 to 850; these read NCHD…YYLD, DKCK…LVAD, and GKCD…STKS. N-linked (GlcNAc...) asparagine glycosylation is present at Asn868. A helical transmembrane segment spans residues 872–892; the sequence is GFGLMFWIVVSLIAACGICAC. The Cytoplasmic portion of the chain corresponds to 893-942; it reads KKCASETKSSNVEYAPLAQYNATNGAINLGAHTDDEDDDEDEVFVNPQIV. The segment at 922–942 is disordered; the sequence is GAHTDDEDDDEDEVFVNPQIV. Residues 926 to 935 show a composition bias toward acidic residues; it reads DDEDDDEDEV.

The protein belongs to the peptidase S8 family. Furin subfamily. The cofactor is Ca(2+). As to expression, in larvae and adults, expressed in all hypodermal cells, vulva and ventral nerve cords. Most highly expressed isoform in the embryonic epidermis. In terms of tissue distribution, expressed primarily in the germline. As to expression, expressed primarily in pharyngeal epithelial cells.

It localises to the membrane. In terms of biological role, serine endoprotease which cleaves proproteins at paired basic amino acids at the consensus RX(K/R)R motif. Involved in N-terminal processing of cuticle collagens and plays a role in cuticle biosynthesis. May cleave both sqt-3 and dpy-17 collagens to promote their secretion. Acts in ASEL sensory neurons to regulate high salt chemotaxis responses probably by cleaving insulin-like protein ins-6 into its mature and active form. Essential for embryonic and larval development. Involved in cuticle biosynthesis but dispensable for larval development. This chain is Endoprotease bli-4 (bli-4), found in Caenorhabditis elegans.